Consider the following 378-residue polypeptide: Cyclic GMP-AMP synthase-like receptor 1 (378 aa).

The Mg(2+) site is built by Glu71, Asp73, and Asp187. 71–73 contributes to the ATP binding site; sequence EFD. GTP contacts are provided by residues Asp187 and 233 to 240; that span reads TSSFYEAE. Residues 237–240, Lys258, and 271–275 contribute to the ATP site; these read YEAE and SYHIK.

This sequence belongs to the mab-21 family. Mg(2+) is required as a cofactor. Requires Mn(2+) as cofactor.

The catalysed reaction is GTP + ATP = 3',2'-cGAMP + 2 diphosphate. The enzyme catalyses GTP + ATP = pppA(2'-5')pG + diphosphate. It catalyses the reaction pppA(2'-5')pG = 3',2'-cGAMP + diphosphate. The enzyme activity is specifically activated by double-stranded RNA (dsRNA). Recognizes long dsRNA (&gt;30 bp) with no preference for 5' RNA phosphorylation. Nucleotidyltransferase that catalyzes the formation of cyclic GMP-AMP (3',2'-cGAMP) from ATP and GTP and plays a key role in antiviral innate immunity. Synthesizes 3',2'-cGAMP in a two-step reaction through production of the linear intermediate pppA(2'-5')pG. Acts as a key sensor of double-stranded RNA (dsRNA), the presence of dsRNA in the cytoplasm being a danger signal that triggers the immune responses. Directly binds dsRNA, activating the nucleotidyltransferase activity, leading to synthesis of 3',2'-cGAMP, a second messenger that binds to and activates Sting, thereby triggering the antiviral immune response via activation of the NF-kappa-B transcription factor Rel (Relish). 3',2'-cGAMP is protected from poxin cleavage. The protein is Cyclic GMP-AMP synthase-like receptor 1 of Drosophila melanogaster (Fruit fly).